The following is a 434-amino-acid chain: UDP-N-acetylmuramoylalanine--D-glutamate ligase (434 aa).

126 to 132 is an ATP binding site; that stretch reads GTSGKTT.

Belongs to the MurCDEF family.

It localises to the cytoplasm. The catalysed reaction is UDP-N-acetyl-alpha-D-muramoyl-L-alanine + D-glutamate + ATP = UDP-N-acetyl-alpha-D-muramoyl-L-alanyl-D-glutamate + ADP + phosphate + H(+). Its pathway is cell wall biogenesis; peptidoglycan biosynthesis. In terms of biological role, cell wall formation. Catalyzes the addition of glutamate to the nucleotide precursor UDP-N-acetylmuramoyl-L-alanine (UMA). The sequence is that of UDP-N-acetylmuramoylalanine--D-glutamate ligase from Desulfovibrio desulfuricans (strain ATCC 27774 / DSM 6949 / MB).